A 63-amino-acid chain; its full sequence is Large ribosomal subunit protein bL28 (63 aa).

It belongs to the bacterial ribosomal protein bL28 family.

The sequence is that of Large ribosomal subunit protein bL28 from Pelobacter propionicus (strain DSM 2379 / NBRC 103807 / OttBd1).